A 97-amino-acid chain; its full sequence is Co-chaperonin GroES (97 aa).

The protein belongs to the GroES chaperonin family. Heptamer of 7 subunits arranged in a ring. Interacts with the chaperonin GroEL.

It is found in the cytoplasm. Functionally, together with the chaperonin GroEL, plays an essential role in assisting protein folding. The GroEL-GroES system forms a nano-cage that allows encapsulation of the non-native substrate proteins and provides a physical environment optimized to promote and accelerate protein folding. GroES binds to the apical surface of the GroEL ring, thereby capping the opening of the GroEL channel. This is Co-chaperonin GroES from Enterobacter sp. (strain 638).